We begin with the raw amino-acid sequence, 423 residues long: UDP-N-acetylmuramoylalanine--D-glutamate ligase (423 aa).

G112–T118 is an ATP binding site.

It belongs to the MurCDEF family.

Its subcellular location is the cytoplasm. It carries out the reaction UDP-N-acetyl-alpha-D-muramoyl-L-alanine + D-glutamate + ATP = UDP-N-acetyl-alpha-D-muramoyl-L-alanyl-D-glutamate + ADP + phosphate + H(+). It functions in the pathway cell wall biogenesis; peptidoglycan biosynthesis. Cell wall formation. Catalyzes the addition of glutamate to the nucleotide precursor UDP-N-acetylmuramoyl-L-alanine (UMA). The sequence is that of UDP-N-acetylmuramoylalanine--D-glutamate ligase from Thermosipho africanus (strain TCF52B).